A 347-amino-acid polypeptide reads, in one-letter code: Protein pelota homolog (347 aa).

The protein belongs to the eukaryotic release factor 1 family. Pelota subfamily. In terms of assembly, monomer. It depends on a divalent metal cation as a cofactor.

Its subcellular location is the cytoplasm. May function in recognizing stalled ribosomes, interact with stem-loop structures in stalled mRNA molecules, and effect endonucleolytic cleavage of the mRNA. May play a role in the release non-functional ribosomes and degradation of damaged mRNAs. Has endoribonuclease activity. The sequence is that of Protein pelota homolog from Methanocaldococcus jannaschii (strain ATCC 43067 / DSM 2661 / JAL-1 / JCM 10045 / NBRC 100440) (Methanococcus jannaschii).